A 113-amino-acid polypeptide reads, in one-letter code: UPF0102 protein Mfla_2283 (113 aa).

The protein belongs to the UPF0102 family.

This chain is UPF0102 protein Mfla_2283, found in Methylobacillus flagellatus (strain ATCC 51484 / DSM 6875 / VKM B-1610 / KT).